The chain runs to 269 residues: RBPJ-interacting and tubulin-associated protein 1 (269 aa).

Residues 5–17 (VELAVSGMQTLGL) carry the Nuclear export signal motif. 2 disordered regions span residues 66–105 (VGKE…PISH) and 141–269 (LWTP…PPWK). Positions 80 to 92 (CETTPSRGSTPTL) are enriched in polar residues. Positions 92-108 (LTPRKKNKYRPISHTPS) match the Nuclear localization signal motif. The tract at residues 128–156 (RMAKGDAAKLRALLWTPPPTPRGSHSPRP) is interaction with RBPJ/RBPSUH. The interaction with tubulin stretch occupies residues 156 to 269 (PREAPLRAIH…ATQKPKPPWK (114 aa)). The segment covering 200–253 (HSLTHLNVPSTGHPATSAPHTNGPQDLRPSTSGVTFRSPLVTSRARSVSISVPS) has biased composition (polar residues).

This sequence belongs to the RITA family. As to quaternary structure, interacts with RBPJ/RBPSUH.

Its subcellular location is the cytoplasm. It is found in the nucleus. The protein resides in the cytoskeleton. It localises to the microtubule organizing center. The protein localises to the centrosome. Its function is as follows. Tubulin-binding protein that acts as a negative regulator of Notch signaling pathway. Shuttles between the cytoplasm and the nucleus and mediates the nuclear export of RBPJ/RBPSUH, thereby preventing the interaction between RBPJ/RBPSUH and NICD product of Notch proteins (Notch intracellular domain), leading to down-regulate Notch-mediated transcription. May play a role in neurogenesis. This Homo sapiens (Human) protein is RBPJ-interacting and tubulin-associated protein 1 (RITA1).